A 220-amino-acid polypeptide reads, in one-letter code: MSGKRADGGHDGAGDVALIIAVKRLAAAKTRLAPVFSARTRESVVLAMLTDTLTAATRVPSLGSITVITPDEAAAAAAAGLGADVLADPTPEGHPDPLNNAIATAERAVSGSFTNIVALQGDLPALQSQELAEAVAAARAHRRSFVADRLATGTAALFAFGTRLDPRFGSDSSARHRSSGAIELTGAWPGLRCDVDTPTDLAAARRLGVGAATARAIAAH.

Phosphoenolpyruvate contacts are provided by Thr-154, Gly-169, and Ser-172.

This sequence belongs to the CofC family.

The catalysed reaction is phosphoenolpyruvate + GTP + H(+) = enolpyruvoyl-2-diphospho-5'-guanosine + diphosphate. Its pathway is cofactor biosynthesis; coenzyme F420 biosynthesis. Guanylyltransferase that catalyzes the activation of phosphoenolpyruvate (PEP) as enolpyruvoyl-2-diphospho-5'-guanosine, via the condensation of PEP with GTP. It is involved in the biosynthesis of coenzyme F420, a hydride carrier cofactor. This chain is Phosphoenolpyruvate guanylyltransferase, found in Mycolicibacterium paratuberculosis (strain ATCC BAA-968 / K-10) (Mycobacterium paratuberculosis).